The sequence spans 259 residues: Secretion system apparatus protein SsaT (259 aa).

Transmembrane regions (helical) follow at residues 9–29 (LIALAVAFIRPLSLSLLLPLL), 35–55 (GAALLRNGVLMSLTFPILPII), 78–98 (VIIGFSIGFCAAVPFWAVDMA), 127–147 (LLFSQFLCVIFFISGGMEFIL), 185–205 (ISFSLPAIICMVLADLALGLL), and 214–234 (VFFFSMPLKSILVLLTLLISF).

Belongs to the FliR/MopE/SpaR family.

It is found in the cell membrane. Its function is as follows. Part of a type III secretion system. This chain is Secretion system apparatus protein SsaT (ssaT), found in Salmonella typhimurium (strain LT2 / SGSC1412 / ATCC 700720).